Consider the following 233-residue polypeptide: uncharacterized protein (233 aa).

Belongs to the asfivirus H233R family.

This is an uncharacterized protein from African swine fever virus (isolate Tick/South Africa/Pretoriuskop Pr4/1996) (ASFV).